The primary structure comprises 260 residues: 4-hydroxy-tetrahydrodipicolinate reductase (260 aa).

NAD(+) contacts are provided by residues 12-17 (GFRGKM), 92-94 (GTT), and 118-121 (APNF). H148 serves as the catalytic Proton donor/acceptor. H149 provides a ligand contact to (S)-2,3,4,5-tetrahydrodipicolinate. K152 (proton donor) is an active-site residue. 158–159 (GT) lines the (S)-2,3,4,5-tetrahydrodipicolinate pocket.

Belongs to the DapB family.

The protein resides in the cytoplasm. The enzyme catalyses (S)-2,3,4,5-tetrahydrodipicolinate + NAD(+) + H2O = (2S,4S)-4-hydroxy-2,3,4,5-tetrahydrodipicolinate + NADH + H(+). It catalyses the reaction (S)-2,3,4,5-tetrahydrodipicolinate + NADP(+) + H2O = (2S,4S)-4-hydroxy-2,3,4,5-tetrahydrodipicolinate + NADPH + H(+). It participates in amino-acid biosynthesis; L-lysine biosynthesis via DAP pathway; (S)-tetrahydrodipicolinate from L-aspartate: step 4/4. Catalyzes the conversion of 4-hydroxy-tetrahydrodipicolinate (HTPA) to tetrahydrodipicolinate. The chain is 4-hydroxy-tetrahydrodipicolinate reductase from Lactococcus lactis subsp. cremoris (strain MG1363).